Reading from the N-terminus, the 293-residue chain is Ribosomal protein L11 methyltransferase (293 aa).

Residues Thr-145, Gly-166, Asp-188, and Asn-230 each contribute to the S-adenosyl-L-methionine site.

Belongs to the methyltransferase superfamily. PrmA family.

The protein localises to the cytoplasm. It catalyses the reaction L-lysyl-[protein] + 3 S-adenosyl-L-methionine = N(6),N(6),N(6)-trimethyl-L-lysyl-[protein] + 3 S-adenosyl-L-homocysteine + 3 H(+). Methylates ribosomal protein L11. The sequence is that of Ribosomal protein L11 methyltransferase from Escherichia coli (strain SMS-3-5 / SECEC).